Here is a 283-residue protein sequence, read N- to C-terminus: Non-selective voltage-gated ion channel VDAC3 (283 aa).

Position 2 is an N-acetylcysteine (Cys-2). Thr-4 bears the Phosphothreonine mark. An N6-acetyllysine mark is found at Lys-12, Lys-15, and Lys-20. The next 2 beta stranded transmembrane spans lie at 26-35 and 39-47; these read MVKIDLRTKS and VEFSTSGHA. Residue Lys-53 forms a Glycyl lysine isopeptide (Lys-Gly) (interchain with G-Cter in ubiquitin) linkage. 3 beta stranded membrane passes run 54–64, 69–76, and 80–89; these read ASGNLETKYKI, LTFTQKWN, and TLGTEISWEN. Lys-90 is subject to N6-acetyllysine. Residues 95 to 104 traverse the membrane as a beta stranded segment; it reads LKLTLDTIFV. Glycyl lysine isopeptide (Lys-Gly) (interchain with G-Cter in ubiquitin) cross-links involve residues Lys-109 and Lys-110. A run of 10 beta stranded transmembrane segments spans residues 111–120, 123–130, 137–145, 150–158, 163–175, 178–185, 189–198, 202–211, 218–227, and 231–238; these read SGKLKASYKR, FSLGSNVD, TIYGWAVLA, LAGYQMSFD, KLSQ…GYKA, FQLHTHVN, EFGGSIYQKV, IETSINLAWT, RFGIAAKYKL, and TSLSAKVN. Ser-241 is subject to Phosphoserine. NAD(+) contacts are provided by residues 242–244 and 260–264; these read LIG and SALID. 2 beta stranded membrane passes run 242–251 and 254–263; these read LIGLGYTQTL and GVKLTLSALI. An N6-acetyllysine; alternate modification is found at Lys-266. Lys-266 is covalently cross-linked (Glycyl lysine isopeptide (Lys-Gly) (interchain with G-Cter in ubiquitin); alternate). The chain crosses the membrane as a beta stranded span at residues 273–282; that stretch reads HKVGLGFELE.

It belongs to the eukaryotic mitochondrial porin family. As to quaternary structure, interacts with ARMC12 in a TBC1D21-dependent manner. Interacts with MISFA. Post-translationally, ubiquitinated by PRKN during mitophagy, leading to its degradation and enhancement of mitophagy. Deubiquitinated by USP30.

It is found in the mitochondrion outer membrane. It localises to the membrane. The enzyme catalyses chloride(in) = chloride(out). It catalyses the reaction K(+)(in) = K(+)(out). Non-selective voltage-gated ion channel that mediates the transport of anions and cations through the mitochondrion outer membrane and plasma membrane. Forms a high-conducting channel with a stable open state and a voltage-induced closure with a mild preference for anions over cations. Involved in male fertility and sperm mitochondrial sheath formation. The chain is Non-selective voltage-gated ion channel VDAC3 from Bos taurus (Bovine).